The chain runs to 1295 residues: DNA-directed RNA polymerase subunit beta' (1295 aa).

Cysteine 60, cysteine 62, cysteine 75, and cysteine 78 together coordinate Zn(2+). Aspartate 516, aspartate 518, and aspartate 520 together coordinate Mg(2+). Residues cysteine 841, cysteine 914, cysteine 921, and cysteine 924 each coordinate Zn(2+).

This sequence belongs to the RNA polymerase beta' chain family. As to quaternary structure, the RNAP catalytic core consists of 2 alpha, 1 beta, 1 beta' and 1 omega subunit. When a sigma factor is associated with the core the holoenzyme is formed, which can initiate transcription. Mg(2+) is required as a cofactor. Requires Zn(2+) as cofactor.

It carries out the reaction RNA(n) + a ribonucleoside 5'-triphosphate = RNA(n+1) + diphosphate. In terms of biological role, DNA-dependent RNA polymerase catalyzes the transcription of DNA into RNA using the four ribonucleoside triphosphates as substrates. The polypeptide is DNA-directed RNA polymerase subunit beta' (Dehalococcoides mccartyi (strain ATCC BAA-2100 / JCM 16839 / KCTC 5957 / BAV1)).